The chain runs to 148 residues: Snaclec alboaggregin-D subunit beta (148 aa).

Residues 1 to 23 form the signal peptide; sequence MGRFISVSFGLLVVFLSLSGAGA. Cys27 and Cys38 are oxidised to a cystine. The region spanning 34-145 is the C-type lectin domain; that stretch reads YDLYCYKVFK…CNSTYSFVCK (112 aa). Residue Asn47 is glycosylated (N-linked (GlcNAc...) asparagine). 2 disulfides stabilise this stretch: Cys55-Cys144 and Cys121-Cys136. N-linked (GlcNAc...) asparagine glycosylation is present at Asn137.

In terms of assembly, tetramer of heterodimers of alpha and beta subunits (alphabeta)(4); disulfide-linked. As to expression, expressed by the venom gland.

It is found in the secreted. Functionally, snaclec that induces human platelet aggregation in the absence of any cofactor with the EC(50) of 0.25 nM and causes tyrosine phosphorylation in human platelets. Antibodies against either platelet GPIbalpha (GP1BA) or GPVI (GP6) inhibit alboaggregin D-induced platelet aggregation. Only the combination of these two antibodies completely inhibit aggregation, suggesting that it acts through both GPIbalpha (GP1BA) and GPVI (GP6). This Trimeresurus albolabris (White-lipped pit viper) protein is Snaclec alboaggregin-D subunit beta.